Consider the following 1232-residue polypeptide: uncharacterized protein (1232 aa).

Belongs to the Mg-chelatase subunit H family.

This is an uncharacterized protein from Methanocaldococcus jannaschii (strain ATCC 43067 / DSM 2661 / JAL-1 / JCM 10045 / NBRC 100440) (Methanococcus jannaschii).